Reading from the N-terminus, the 139-residue chain is Small ribosomal subunit protein uS12m (139 aa).

Residues 1 to 29 constitute a mitochondrion transit peptide; it reads MSWSGLLRGLSMSLNYGLALAPRPWGTRP. A disordered region spans residues 37–57; the sequence is HRRGPPKFPPSKPGPTEGRPQ.

Belongs to the universal ribosomal protein uS12 family. Component of the mitochondrial ribosome small subunit (28S) which comprises a 12S rRNA and about 30 distinct proteins.

Its subcellular location is the mitochondrion. In Bos taurus (Bovine), this protein is Small ribosomal subunit protein uS12m (MRPS12).